The chain runs to 337 residues: Secreted effector protein EspF(U) (337 aa).

5 consecutive repeat copies span residues 96 to 142, 143 to 189, 190 to 236, 237 to 283, and 284 to 330. Residues 96–330 are 5 X 48 AA approximate tandem repeats; it reads IKPARSMAEH…RLMQHLAEHG (235 aa). Residues 291–312 are disordered; it reads AEHIPPAPNWPAPTPPVQNEQS. The segment covering 295-306 has biased composition (pro residues); sequence PPAPNWPAPTPP.

Belongs to the EspF(U)/TccP family. Interacts with host BAIAP2 and host WASL/N-WASP. Can also interact with host proteins BAIAP2L1 and WAS/WASP.

The protein resides in the secreted. The protein localises to the host cytoplasm. In terms of biological role, required for efficient pedestal formation in host epithelial cells during infection. Acts as an intermediate between Tir (via host BAIAP2) and host WASL/N-WASP. Directly binds and activates WASL/N-WASP, which stimulates actin polymerization and leads to the formation of actin pedestals at the sites of bacterial adhesion. This chain is Secreted effector protein EspF(U) (espF(U)), found in Escherichia coli O157:H7.